We begin with the raw amino-acid sequence, 369 residues long: Phosphate acyltransferase (369 aa).

The protein belongs to the PlsX family. In terms of assembly, homodimer. Probably interacts with PlsY.

The protein localises to the cytoplasm. It carries out the reaction a fatty acyl-[ACP] + phosphate = an acyl phosphate + holo-[ACP]. The protein operates within lipid metabolism; phospholipid metabolism. In terms of biological role, catalyzes the reversible formation of acyl-phosphate (acyl-PO(4)) from acyl-[acyl-carrier-protein] (acyl-ACP). This enzyme utilizes acyl-ACP as fatty acyl donor, but not acyl-CoA. The chain is Phosphate acyltransferase from Gluconobacter oxydans (strain 621H) (Gluconobacter suboxydans).